Reading from the N-terminus, the 627-residue chain is (+)-3-carene synthase 1, chloroplastic (627 aa).

A chloroplast-targeting transit peptide spans M1–V36. Mg(2+)-binding residues include D378, D382, and D530. The DDXXD motif motif lies at D378–D382.

The protein belongs to the terpene synthase family. Tpsd subfamily. It depends on Mg(2+) as a cofactor. The cofactor is Mn(2+).

Its subcellular location is the plastid. It is found in the chloroplast. It catalyses the reaction (2E)-geranyl diphosphate = (+)-car-3-ene + diphosphate. Its pathway is terpene metabolism; oleoresin biosynthesis. Functionally, terpene synthase (TPS) involved in the biosynthesis of monoterpene natural products included in conifer oleoresin secretions and volatile emissions; these compounds contribute to biotic and abiotic stress defense against herbivores (e.g. insect attack by white pine weevil P.strobi) and pathogens. Catalyzes the conversion of (2E)-geranyl diphosphate (GPP) to (+)-car-3-ene. The sequence is that of (+)-3-carene synthase 1, chloroplastic from Picea sitchensis (Sitka spruce).